Consider the following 348-residue polypeptide: Methylthioribose-1-phosphate isomerase (348 aa).

Substrate contacts are provided by residues 53-55 (RGA), R93, and Q197. Residue D238 is the Proton donor of the active site. 248–249 (NK) serves as a coordination point for substrate.

The protein belongs to the eIF-2B alpha/beta/delta subunits family. MtnA subfamily.

The enzyme catalyses 5-(methylsulfanyl)-alpha-D-ribose 1-phosphate = 5-(methylsulfanyl)-D-ribulose 1-phosphate. Its pathway is amino-acid biosynthesis; L-methionine biosynthesis via salvage pathway; L-methionine from S-methyl-5-thio-alpha-D-ribose 1-phosphate: step 1/6. Catalyzes the interconversion of methylthioribose-1-phosphate (MTR-1-P) into methylthioribulose-1-phosphate (MTRu-1-P). The protein is Methylthioribose-1-phosphate isomerase of Gloeobacter violaceus (strain ATCC 29082 / PCC 7421).